The primary structure comprises 362 residues: Molybdenum import ATP-binding protein ModC (362 aa).

The region spanning 2–236 is the ABC transporter domain; it reads ASPIEVRLHM…LDLPLAMGGD (235 aa). 34 to 41 lines the ATP pocket; the sequence is GPSGSGKT. A Mop domain is found at 297–362; sequence QSSILNRLPV…AQIKAVAVLA (66 aa).

Belongs to the ABC transporter superfamily. Molybdate importer (TC 3.A.1.8) family. As to quaternary structure, the complex is composed of two ATP-binding proteins (ModC), two transmembrane proteins (ModB) and a solute-binding protein (ModA).

Its subcellular location is the cell inner membrane. It catalyses the reaction molybdate(out) + ATP + H2O = molybdate(in) + ADP + phosphate + H(+). Part of the ABC transporter complex ModABC involved in molybdenum import. Responsible for energy coupling to the transport system. In Pseudomonas savastanoi pv. phaseolicola (strain 1448A / Race 6) (Pseudomonas syringae pv. phaseolicola (strain 1448A / Race 6)), this protein is Molybdenum import ATP-binding protein ModC.